The chain runs to 632 residues: MTQQTMSFQAEVKQLLHLMIHSLYSNKEIFLRELVSNASDAADKLRFEALENNALYESDPNLRIRLSFDKAARTITIDDNGIGMSRDEAIANLGTIARSGTKEFFSKLSGDQQKDAALIGQFGVGFYSGFIVADRITVETRRAGLPASEGVRWESAGEGDFQVDTIERAARGTTITLHLREGEDELLSSYRLKSIVQKYSDHVALPILMKKEEWDQEKGEMVEKDEDETINQASALWTRAKSEVTDEQYKQFYQHVAHDHQDPLAWTHNRVEGRSEYTQLLFVPSHAPFDLWNRDYRGGLKLYVKRVFIMDDAEQLLPQYLRFIKGVVDSSDLPLNVSREILQESRDVKAIREGVTKRALSMLEELANAEDDAGKEKYKTFWSAFGQVLKEGIGEDHANRERVAKLLRFASTHGDTDAQDVALADYVARMKPEQTKIYYVTADTWQAAKNSPHLEVFRKKGVEVLLLTDRVDEWMLSFLHEFDGKPLASVARGDLDLGALNDDEKKAQEETGEAMKPVVDKMKETLGEKVKDVRVTFRLTDSPSCLVADDNDMSGYLQRMLKAAGQSAPSFQPILEINPEHPLVKALKADGADFGDWCHLLFDQALLAEGGALEDPASFVKRTNALLLSRAA.

The a; substrate-binding stretch occupies residues 1–339 (MTQQTMSFQA…SSDLPLNVSR (339 aa)). Residues 340-559 (EILQESRDVK…DNDMSGYLQR (220 aa)) are b. Positions 560-632 (MLKAAGQSAP…TNALLLSRAA (73 aa)) are c.

This sequence belongs to the heat shock protein 90 family. In terms of assembly, homodimer.

The protein resides in the cytoplasm. In terms of biological role, molecular chaperone. Has ATPase activity. The polypeptide is Chaperone protein HtpG (Burkholderia pseudomallei (strain 668)).